The following is a 259-amino-acid chain: Haloacid dehalogenase-like hydrolase domain-containing protein 2 (259 aa).

D13 and N15 together coordinate Mg(2+). Substrate is bound by residues 13–15 and 46–47; these read DLN and TN. Residues 47-72 are a coiled coil; it reads NTTKESKKDLLERLKKLEFEISEDEI. N6-succinyllysine is present on K50. A substrate-binding site is contributed by K179. D204 provides a ligand contact to Mg(2+).

It belongs to the HAD-like hydrolase superfamily. Mg(2+) is required as a cofactor.

The sequence is that of Haloacid dehalogenase-like hydrolase domain-containing protein 2 (Hdhd2) from Mus musculus (Mouse).